A 192-amino-acid chain; its full sequence is 7-methyl-GTP pyrophosphatase (192 aa).

D69 serves as the catalytic Proton acceptor.

Belongs to the Maf family. YceF subfamily. Requires a divalent metal cation as cofactor.

It localises to the cytoplasm. The enzyme catalyses N(7)-methyl-GTP + H2O = N(7)-methyl-GMP + diphosphate + H(+). Functionally, nucleoside triphosphate pyrophosphatase that hydrolyzes 7-methyl-GTP (m(7)GTP). May have a dual role in cell division arrest and in preventing the incorporation of modified nucleotides into cellular nucleic acids. The chain is 7-methyl-GTP pyrophosphatase from Pseudomonas syringae pv. syringae (strain B728a).